The sequence spans 505 residues: Ribose import ATP-binding protein RbsA 1 (505 aa).

ABC transporter domains lie at 13–249 (LALR…VGRD) and 254–503 (YPKQ…TGRA). Residue 45-52 (GENGAGKS) participates in ATP binding.

Belongs to the ABC transporter superfamily. Ribose importer (TC 3.A.1.2.1) family. The complex is composed of an ATP-binding protein (RbsA), two transmembrane proteins (RbsC) and a solute-binding protein (RbsB).

Its subcellular location is the cell membrane. The catalysed reaction is D-ribose(out) + ATP + H2O = D-ribose(in) + ADP + phosphate + H(+). In terms of biological role, part of the ABC transporter complex RbsABC involved in ribose import. Responsible for energy coupling to the transport system. This is Ribose import ATP-binding protein RbsA 1 from Streptomyces coelicolor (strain ATCC BAA-471 / A3(2) / M145).